We begin with the raw amino-acid sequence, 314 residues long: MGGKSANKAGYFDKLKGLLEEYKSIFIVSVDNVSSQQMHEIRQALRDQGVVLMGKNTMVRRALKTFLVDSPEYERLLPFVKGNVGFVFTNGDLKEIRDKILANKVAAPARAGAVAPVDVWIPAGNTGMEPGKTSFFQALGVPTKIARGTIEITTDLKLVEAGAKVGPSEATLLNMLNISPFTYGMGIAQVYDQGNTFPSSVLDISEEQLLKAFSSAITTIAAVSLALNFPTLPSVIHSLVNSYKKVLAVAIETEISWPEIEELKDRIANPEAYAAAAPVAAADSGAAAGGAAAEEEKEEEEESDEEGGFGDLFG.

Residues 285–314 (GAAAGGAAAEEEKEEEEESDEEGGFGDLFG) are disordered. Positions 293-308 (AEEEKEEEEESDEEGG) are enriched in acidic residues. Ser303 is modified (phosphoserine; by CK1).

It belongs to the universal ribosomal protein uL10 family. In terms of assembly, component of the large ribosomal subunit. P0 forms a pentameric complex by interaction with dimers of P1 and P2. In terms of processing, phosphorylated.

Functionally, ribosomal protein P0 is the functional equivalent of E.coli protein L10. This Podospora anserina (Pleurage anserina) protein is Large ribosomal subunit protein uL10.